The sequence spans 297 residues: Protein PecM (297 aa).

10 helical membrane passes run 6–26, 38–58, 60–80, 86–106, 116–136, 138–158, 167–187, 203–223, 231–251, and 261–281; these read FAFYAPCVWGTTYFVTTQFLP, ALPAGIILILGKNLPPVGWLW, LFVLGALNIGVFFVMLFFAAY, VVALVGSLQPLIVILLSFLLL, VAAVAGGIGIVLLISLPKAPL, PAGLVASALATMSMASGLVLT, MTMLTFTGWQLFCGGLVILPV, LAGYLYLAIPGSLLAYFMWFS, VIMSLLGFLSPLVALLLGFLF, and LVGVVFIFSALIIVQDISLFS. EamA domains are found at residues 12–130 and 149–276; these read CVWG…LLIS and MSMA…IVQD.

This sequence belongs to the EamA transporter family.

The protein resides in the cell membrane. Involved in pectinase, cellulase, and blue pigment regulation. This chain is Protein PecM (pecM), found in Dickeya dadantii (strain 3937) (Erwinia chrysanthemi (strain 3937)).